Here is a 507-residue protein sequence, read N- to C-terminus: Glycogen synthase (507 aa).

Residue Lys15 coordinates ADP-alpha-D-glucose.

The protein belongs to the glycosyltransferase 1 family. Bacterial/plant glycogen synthase subfamily.

The catalysed reaction is [(1-&gt;4)-alpha-D-glucosyl](n) + ADP-alpha-D-glucose = [(1-&gt;4)-alpha-D-glucosyl](n+1) + ADP + H(+). Its pathway is glycan biosynthesis; glycogen biosynthesis. Functionally, synthesizes alpha-1,4-glucan chains using ADP-glucose. This chain is Glycogen synthase, found in Rhodopirellula baltica (strain DSM 10527 / NCIMB 13988 / SH1).